The chain runs to 292 residues: Elongation factor Ts (292 aa).

The interval 79–82 (TDFV) is involved in Mg(2+) ion dislocation from EF-Tu.

It belongs to the EF-Ts family.

Its subcellular location is the cytoplasm. Its function is as follows. Associates with the EF-Tu.GDP complex and induces the exchange of GDP to GTP. It remains bound to the aminoacyl-tRNA.EF-Tu.GTP complex up to the GTP hydrolysis stage on the ribosome. The polypeptide is Elongation factor Ts (Staphylococcus epidermidis (strain ATCC 12228 / FDA PCI 1200)).